A 155-amino-acid polypeptide reads, in one-letter code: Ribosomal RNA large subunit methyltransferase H (155 aa).

Residues L73, G104, and 123 to 128 (LSPLTL) contribute to the S-adenosyl-L-methionine site.

The protein belongs to the RNA methyltransferase RlmH family. As to quaternary structure, homodimer.

It is found in the cytoplasm. The enzyme catalyses pseudouridine(1915) in 23S rRNA + S-adenosyl-L-methionine = N(3)-methylpseudouridine(1915) in 23S rRNA + S-adenosyl-L-homocysteine + H(+). Its function is as follows. Specifically methylates the pseudouridine at position 1915 (m3Psi1915) in 23S rRNA. In Pseudomonas fluorescens (strain ATCC BAA-477 / NRRL B-23932 / Pf-5), this protein is Ribosomal RNA large subunit methyltransferase H.